Here is a 335-residue protein sequence, read N- to C-terminus: N-acetyl-gamma-glutamyl-phosphate reductase (335 aa).

The active site involves Cys-155.

The protein belongs to the NAGSA dehydrogenase family. Type 1 subfamily.

Its subcellular location is the cytoplasm. The enzyme catalyses N-acetyl-L-glutamate 5-semialdehyde + phosphate + NADP(+) = N-acetyl-L-glutamyl 5-phosphate + NADPH + H(+). The protein operates within amino-acid biosynthesis; L-arginine biosynthesis; N(2)-acetyl-L-ornithine from L-glutamate: step 3/4. In terms of biological role, catalyzes the NADPH-dependent reduction of N-acetyl-5-glutamyl phosphate to yield N-acetyl-L-glutamate 5-semialdehyde. The chain is N-acetyl-gamma-glutamyl-phosphate reductase from Pasteurella multocida (strain Pm70).